The sequence spans 335 residues: Non-structural protein P9-1 (335 aa).

Residues 27–42 (FNANTKNQNQNTSNTQ) are compositionally biased toward low complexity. A disordered region spans residues 27 to 48 (FNANTKNQNQNTSNTQSSGGIT).

This Fiji disease virus (isolate Sugarcane) (FDV) protein is Non-structural protein P9-1 (S9).